The sequence spans 103 residues: Phosphoribosyl-ATP pyrophosphatase (103 aa).

The protein belongs to the PRA-PH family.

The protein localises to the cytoplasm. It catalyses the reaction 1-(5-phospho-beta-D-ribosyl)-ATP + H2O = 1-(5-phospho-beta-D-ribosyl)-5'-AMP + diphosphate + H(+). The protein operates within amino-acid biosynthesis; L-histidine biosynthesis; L-histidine from 5-phospho-alpha-D-ribose 1-diphosphate: step 2/9. In Listeria monocytogenes serovar 1/2a (strain ATCC BAA-679 / EGD-e), this protein is Phosphoribosyl-ATP pyrophosphatase (hisE).